Reading from the N-terminus, the 275-residue chain is Shikimate dehydrogenase (NADP(+)) (275 aa).

Residues 17–19 (SKS) and T64 contribute to the shikimate site. Residue K68 is the Proton acceptor of the active site. An NADP(+)-binding site is contributed by E80. Shikimate is bound by residues N89 and D105. Residues 129 to 133 (GAGGA), 152 to 157 (NRTFFK), and M216 each bind NADP(+). Y218 serves as a coordination point for shikimate. G240 is a binding site for NADP(+).

The protein belongs to the shikimate dehydrogenase family. Homodimer.

It catalyses the reaction shikimate + NADP(+) = 3-dehydroshikimate + NADPH + H(+). Its pathway is metabolic intermediate biosynthesis; chorismate biosynthesis; chorismate from D-erythrose 4-phosphate and phosphoenolpyruvate: step 4/7. Involved in the biosynthesis of the chorismate, which leads to the biosynthesis of aromatic amino acids. Catalyzes the reversible NADPH linked reduction of 3-dehydroshikimate (DHSA) to yield shikimate (SA). This chain is Shikimate dehydrogenase (NADP(+)), found in Pectobacterium atrosepticum (strain SCRI 1043 / ATCC BAA-672) (Erwinia carotovora subsp. atroseptica).